The primary structure comprises 154 residues: MHIWVDADACPSVIKDILFRVADRLQLNVTLVANQLMRVPGSRFIRALQVPAGADAADAEIVARVSPGDIVVTGDIPLASLVLEKGGLPLNPRGEWYTKDTIAQQLTMRAFMEELRGSGVDTGGPAAFSQADRQNFANALDRELARRRNHSGPR.

This sequence belongs to the UPF0178 family.

In Paucimonas lemoignei (Pseudomonas lemoignei), this protein is UPF0178 protein in pahZ1 5'region.